Reading from the N-terminus, the 242-residue chain is UPF0309 protein Oant_1457 (242 aa).

Residues 30–214 form the SIS domain; it reads AAELITAAAL…AKLVGKGDAP (185 aa).

This sequence belongs to the UPF0309 family.

In Brucella anthropi (strain ATCC 49188 / DSM 6882 / CCUG 24695 / JCM 21032 / LMG 3331 / NBRC 15819 / NCTC 12168 / Alc 37) (Ochrobactrum anthropi), this protein is UPF0309 protein Oant_1457.